The sequence spans 113 residues: Putative anti-sigma factor antagonist TM_1081 (113 aa).

The region spanning 1-110 (MFPYKIVDDV…DTISEAMEEV (110 aa)) is the STAS domain. At serine 55 the chain carries Phosphoserine.

The protein belongs to the anti-sigma-factor antagonist family. Post-translationally, phosphorylated on a serine residue.

Its function is as follows. In the phosphorylated form it could act as an anti-anti-sigma factor that counteracts an anti-sigma factor and thus releases a sigma factor from inhibition. This is Putative anti-sigma factor antagonist TM_1081 from Thermotoga maritima (strain ATCC 43589 / DSM 3109 / JCM 10099 / NBRC 100826 / MSB8).